Consider the following 248-residue polypeptide: Pyridoxine 5'-phosphate synthase (248 aa).

Residue Asn-12 participates in 3-amino-2-oxopropyl phosphate binding. Residue Asp-14–His-15 participates in 1-deoxy-D-xylulose 5-phosphate binding. 3-amino-2-oxopropyl phosphate is bound at residue Arg-23. The active-site Proton acceptor is the His-48. Arg-50 and His-55 together coordinate 1-deoxy-D-xylulose 5-phosphate. Glu-75 serves as the catalytic Proton acceptor. Thr-105 contacts 1-deoxy-D-xylulose 5-phosphate. The active-site Proton donor is His-196. 3-amino-2-oxopropyl phosphate contacts are provided by residues Gly-197 and Gly-218–His-219.

Belongs to the PNP synthase family. As to quaternary structure, homooctamer; tetramer of dimers.

The protein localises to the cytoplasm. It catalyses the reaction 3-amino-2-oxopropyl phosphate + 1-deoxy-D-xylulose 5-phosphate = pyridoxine 5'-phosphate + phosphate + 2 H2O + H(+). It participates in cofactor biosynthesis; pyridoxine 5'-phosphate biosynthesis; pyridoxine 5'-phosphate from D-erythrose 4-phosphate: step 5/5. Catalyzes the complicated ring closure reaction between the two acyclic compounds 1-deoxy-D-xylulose-5-phosphate (DXP) and 3-amino-2-oxopropyl phosphate (1-amino-acetone-3-phosphate or AAP) to form pyridoxine 5'-phosphate (PNP) and inorganic phosphate. The protein is Pyridoxine 5'-phosphate synthase of Stutzerimonas stutzeri (strain A1501) (Pseudomonas stutzeri).